The primary structure comprises 411 residues: ATP-dependent Clp protease ATP-binding subunit ClpX (411 aa).

Residues methionine 1–lysine 51 form the ClpX-type ZB domain. Zn(2+)-binding residues include cysteine 10, cysteine 13, cysteine 32, and cysteine 35. Proline 119–leucine 126 contacts ATP.

It belongs to the ClpX chaperone family. In terms of assembly, component of the ClpX-ClpP complex. Forms a hexameric ring that, in the presence of ATP, binds to fourteen ClpP subunits assembled into a disk-like structure with a central cavity, resembling the structure of eukaryotic proteasomes.

In terms of biological role, ATP-dependent specificity component of the Clp protease. It directs the protease to specific substrates. Can perform chaperone functions in the absence of ClpP. In Porphyromonas gingivalis (strain ATCC 33277 / DSM 20709 / CIP 103683 / JCM 12257 / NCTC 11834 / 2561), this protein is ATP-dependent Clp protease ATP-binding subunit ClpX.